Reading from the N-terminus, the 93-residue chain is Pyrimidine/purine nucleoside phosphorylase (93 aa).

Belongs to the nucleoside phosphorylase PpnP family.

It catalyses the reaction a purine D-ribonucleoside + phosphate = a purine nucleobase + alpha-D-ribose 1-phosphate. The enzyme catalyses adenosine + phosphate = alpha-D-ribose 1-phosphate + adenine. It carries out the reaction cytidine + phosphate = cytosine + alpha-D-ribose 1-phosphate. The catalysed reaction is guanosine + phosphate = alpha-D-ribose 1-phosphate + guanine. It catalyses the reaction inosine + phosphate = alpha-D-ribose 1-phosphate + hypoxanthine. The enzyme catalyses thymidine + phosphate = 2-deoxy-alpha-D-ribose 1-phosphate + thymine. It carries out the reaction uridine + phosphate = alpha-D-ribose 1-phosphate + uracil. The catalysed reaction is xanthosine + phosphate = alpha-D-ribose 1-phosphate + xanthine. Functionally, catalyzes the phosphorolysis of diverse nucleosides, yielding D-ribose 1-phosphate and the respective free bases. Can use uridine, adenosine, guanosine, cytidine, thymidine, inosine and xanthosine as substrates. Also catalyzes the reverse reactions. This is Pyrimidine/purine nucleoside phosphorylase from Photobacterium profundum (strain SS9).